Consider the following 215-residue polypeptide: Disulfide-bond oxidoreductase YfcG (215 aa).

The GST N-terminal domain occupies 1–87; the sequence is MIDLYFAPTP…YLAEKTGLFL (87 aa). Glutathione-binding positions include asparagine 11, glutamine 38, arginine 40, isoleucine 52, 71 to 72, and arginine 132; that span reads ES. One can recognise a GST C-terminal domain in the interval 90–215; that stretch reads ETRERAATLQ…AQLGDERSDS (126 aa).

The protein belongs to the GST superfamily. Nu-class GSH transferase family. As to quaternary structure, homodimer.

Exhibits a very robust glutathione (GSH)-dependent disulfide-bond reductase activity toward the model substrate, 2-hydroxyethyl disulfide; the actual physiological substrates are not known. Also has a low GSH-dependent hydroperoxidase activity toward cumene hydroperoxide, but does not reduce H(2)O(2), tert-butyl hydroperoxide, benzyl peroxide, or lauroyl peroxide. Exhibits little or no GSH transferase activity with most typical electrophilic substrates, and has no detectable transferase activity using glutathionylspermidine (GspSH) as the nucleophilic substrate. Is involved in defense against oxidative stress, probably via its peroxidase activity. This Escherichia coli (strain K12) protein is Disulfide-bond oxidoreductase YfcG (yfcG).